A 235-amino-acid chain; its full sequence is Phosphoribosylaminoimidazole-succinocarboxamide synthase (235 aa).

The protein belongs to the SAICAR synthetase family.

It catalyses the reaction 5-amino-1-(5-phospho-D-ribosyl)imidazole-4-carboxylate + L-aspartate + ATP = (2S)-2-[5-amino-1-(5-phospho-beta-D-ribosyl)imidazole-4-carboxamido]succinate + ADP + phosphate + 2 H(+). It functions in the pathway purine metabolism; IMP biosynthesis via de novo pathway; 5-amino-1-(5-phospho-D-ribosyl)imidazole-4-carboxamide from 5-amino-1-(5-phospho-D-ribosyl)imidazole-4-carboxylate: step 1/2. The sequence is that of Phosphoribosylaminoimidazole-succinocarboxamide synthase from Chloroherpeton thalassium (strain ATCC 35110 / GB-78).